The primary structure comprises 332 residues: tRNA-dihydrouridine synthase B (332 aa).

FMN-binding positions include P19 to A21 and Q73. C103 serves as the catalytic Proton donor. FMN-binding positions include K142, N203 to D205, and G227 to R228.

It belongs to the Dus family. DusB subfamily. The cofactor is FMN.

It carries out the reaction a 5,6-dihydrouridine in tRNA + NAD(+) = a uridine in tRNA + NADH + H(+). It catalyses the reaction a 5,6-dihydrouridine in tRNA + NADP(+) = a uridine in tRNA + NADPH + H(+). Functionally, catalyzes the synthesis of 5,6-dihydrouridine (D), a modified base found in the D-loop of most tRNAs, via the reduction of the C5-C6 double bond in target uridines. The chain is tRNA-dihydrouridine synthase B from Pseudomonas aeruginosa (strain ATCC 15692 / DSM 22644 / CIP 104116 / JCM 14847 / LMG 12228 / 1C / PRS 101 / PAO1).